A 156-amino-acid chain; its full sequence is Small ribosomal subunit protein uS7 (156 aa).

The protein belongs to the universal ribosomal protein uS7 family. As to quaternary structure, part of the 30S ribosomal subunit. Contacts proteins S9 and S11.

Functionally, one of the primary rRNA binding proteins, it binds directly to 16S rRNA where it nucleates assembly of the head domain of the 30S subunit. Is located at the subunit interface close to the decoding center, probably blocks exit of the E-site tRNA. The protein is Small ribosomal subunit protein uS7 of Thermoanaerobacter sp. (strain X514).